The sequence spans 127 residues: MRALALDVGLKRIGVALCVDKKIALPLDAVLRKNRNQAANEIKNLLKIHEISLLIVGIPKGGSREEEMTRRIKHFVSLLEFDKEICFVDESGTSKEALGYGVANTRKKDGKLDSLSAFIMIKDYFAL.

It belongs to the YqgF nuclease family.

Its subcellular location is the cytoplasm. Could be a nuclease involved in processing of the 5'-end of pre-16S rRNA. In Campylobacter jejuni subsp. jejuni serotype O:23/36 (strain 81-176), this protein is Putative pre-16S rRNA nuclease.